The chain runs to 231 residues: MAGLVDLKNEEEVKEYLDNLGTEYSYQCLKEKQPDGCNRLAEYLENIKKNFESAAQILKINCDQNEHSESCYKLGAYYVTGKGGLPVDLKAAYGCFLKSCNKGGKKSIDSCHNVGLLSHDGRVNDDKPDALKARDYYNKACDGNFAASCFNLSAIYLQGAPGIPKDMNMALHFSEKACSLGHMWGCANASRMYKLGDGVAKNDEKAESLKNKARDLHRMQQERTQQISFGE.

5 Sel1-like repeats span residues 34–66 (PDGC…DQNE), 68–104 (SESC…NKGG), 108–145 (IDSC…DGNF), 146–182 (AASC…SLGH), and 183–218 (MWGC…DLHR).

This sequence belongs to the hcp beta-lactamase family.

Its subcellular location is the mitochondrion intermembrane space. Its function is as follows. May be required for assembly of mitochondrial respiratory chain complexes. In Xenopus tropicalis (Western clawed frog), this protein is Cytochrome c oxidase assembly factor 7 (coa7).